Reading from the N-terminus, the 142-residue chain is Large ribosomal subunit protein uL13 (142 aa).

Belongs to the universal ribosomal protein uL13 family. In terms of assembly, part of the 50S ribosomal subunit.

Its function is as follows. This protein is one of the early assembly proteins of the 50S ribosomal subunit, although it is not seen to bind rRNA by itself. It is important during the early stages of 50S assembly. This is Large ribosomal subunit protein uL13 from Aeromonas salmonicida (strain A449).